Reading from the N-terminus, the 130-residue chain is Small ribosomal subunit protein uS9 (130 aa).

A disordered region spans residues 101-130 (AGLLTRDARMKERKKPGLKKARKASQFSKR). The segment covering 111-130 (KERKKPGLKKARKASQFSKR) has biased composition (basic residues).

It belongs to the universal ribosomal protein uS9 family.

The sequence is that of Small ribosomal subunit protein uS9 from Levilactobacillus brevis (strain ATCC 367 / BCRC 12310 / CIP 105137 / JCM 1170 / LMG 11437 / NCIMB 947 / NCTC 947) (Lactobacillus brevis).